The following is a 125-amino-acid chain: Cu-Zn superoxide dismutase-like protein (125 aa).

The cysteines at positions 52 and 102 are disulfide-linked.

This sequence belongs to the Cu-Zn superoxide dismutase family.

It localises to the host cytoplasm. Functionally, virion protein with no enzymatic activity. The protein is Cu-Zn superoxide dismutase-like protein of Camelpox virus (strain M-96).